Reading from the N-terminus, the 298-residue chain is MYNGIVLVDKPAGLTSFDVVAKLRKIFQQKQVGHTGTLDPSVTGLLVIVLGKATKLIDYLQENQKQYRGTLILGLKTDTQDMDGQVTEMQFLKEAIADFKKKAAFDSFLGSSDQLPPMYSAVKVGGKHLYELARKGETIERKSRKIKVMEFQQVGGSKFDASKGQEYINFVATVSKGTYIRTLIEDFGAKLGLPATMMRLRRIEADGYDVKNSINLEEILASKTPRKFIIPMEKLLPTLPKYSVGSDDWQLIKNGGWLKELPISVSPVKIFYNNSFQAIYEKQDGFYKPKKMLIHEDH.

Residue D39 is the Nucleophile of the active site.

It belongs to the pseudouridine synthase TruB family. Type 1 subfamily.

The catalysed reaction is uridine(55) in tRNA = pseudouridine(55) in tRNA. In terms of biological role, responsible for synthesis of pseudouridine from uracil-55 in the psi GC loop of transfer RNAs. This chain is tRNA pseudouridine synthase B, found in Oenococcus oeni (strain ATCC BAA-331 / PSU-1).